The sequence spans 333 residues: MRILITGGGTGGHLSVAKSLKEAFKKKDATLYYIGSIQGQDRSWFENDEDFQKKLFFDVEGVVNKKGINKIRALTDIVRASFAAKKLIKNESIDAVVSVGGYSAAAASFAALQLNLPLFIHEQNAVKGKLNRLLSPFAKRVFCSFVPPYDPYPVQNIFYETRRIRKELTTIIFLGGSQGAKQINDLAMSWAKELQKHNIKIIHQTGTRDFERVRSFYAKERIEADVFAFDQNLAQKIVQADFAVSRSGASTLWELATNLLPALYIPYPYAAGDHQKHNALFLYRHDASMVFEGQSPQDILSLNIFSMSENLLPFSRPDGATKIVLSIVKMIEK.

Residues 10-12 (TGG), asparagine 124, serine 177, and glutamine 275 each bind UDP-N-acetyl-alpha-D-glucosamine.

The protein belongs to the glycosyltransferase 28 family. MurG subfamily.

The protein localises to the cell inner membrane. It catalyses the reaction di-trans,octa-cis-undecaprenyl diphospho-N-acetyl-alpha-D-muramoyl-L-alanyl-D-glutamyl-meso-2,6-diaminopimeloyl-D-alanyl-D-alanine + UDP-N-acetyl-alpha-D-glucosamine = di-trans,octa-cis-undecaprenyl diphospho-[N-acetyl-alpha-D-glucosaminyl-(1-&gt;4)]-N-acetyl-alpha-D-muramoyl-L-alanyl-D-glutamyl-meso-2,6-diaminopimeloyl-D-alanyl-D-alanine + UDP + H(+). It functions in the pathway cell wall biogenesis; peptidoglycan biosynthesis. In terms of biological role, cell wall formation. Catalyzes the transfer of a GlcNAc subunit on undecaprenyl-pyrophosphoryl-MurNAc-pentapeptide (lipid intermediate I) to form undecaprenyl-pyrophosphoryl-MurNAc-(pentapeptide)GlcNAc (lipid intermediate II). The protein is UDP-N-acetylglucosamine--N-acetylmuramyl-(pentapeptide) pyrophosphoryl-undecaprenol N-acetylglucosamine transferase of Nitratiruptor sp. (strain SB155-2).